The following is a 619-amino-acid chain: Lysophospholipid acyltransferase (619 aa).

At 1–19 (MYNPVDAVLTKIITNYGID) the chain is on the lumenal side. Residues 20–39 (SFTLRYAICLLGSFPLNAIL) form a helical membrane-spanning segment. Topologically, residues 40-51 (KRIPEKRIGLKC) are cytoplasmic. The helical transmembrane segment at 52 to 72 (CFIISMSMFYLFGVLNLVSGF) threads the bilayer. Residues 73-92 (RTLFISTMFTYLISRFYRSK) lie on the Lumenal side of the membrane. The chain crosses the membrane as a helical span at residues 93-113 (FMPHLNFMFVMGHLAINHIHA). At 114 to 231 (QFLNEQTQTT…GERRQIPKNG (118 aa)) the chain is on the cytoplasmic side. Asp146 functions as the Nucleophile in the catalytic mechanism. The chain crosses the membrane as a helical span at residues 232 to 252 (KLALWKVVQGLAWMILSTLGM). Residues 253 to 274 (KHFPVKYVLDKDGFPTRSFIFR) are Lumenal-facing. The helical transmembrane segment at 275-295 (IHYLFLLGFIHRFKYYAAWTI) threads the bilayer. The Cytoplasmic portion of the chain corresponds to 296-429 (SEGSCILCGL…TPLPSKKIYD (134 aa)). Glu297 acts as the Nucleophile in catalysis. His382 is a catalytic residue. The helical transmembrane segment at 430-450 (LVGIYAIKLAFGYMVQPFIIL) threads the bilayer. The Lumenal segment spans residues 451 to 456 (DLKPSL). Residues 457 to 477 (MVWGSVYFYVHIIVAFSFFLF) form a helical membrane-spanning segment. The Cytoplasmic segment spans residues 478–619 (RGPYAKQVTE…SPKPISKKEE (142 aa)). Residue Ser513 is modified to Phosphoserine. The stretch at 545-593 (ELEKWDNAKEDWEDFCKDYKEWRNKNGLEIEEENLSKAFERFKQEFSNA) forms a coiled coil. The tract at residues 592 to 619 (NAASGSGERVRKMSFSGYSPKPISKKEE) is disordered. Ser605, Ser610, and Ser615 each carry phosphoserine.

This sequence belongs to the membrane-bound acyltransferase family.

It localises to the endoplasmic reticulum membrane. It carries out the reaction a 1-acyl-sn-glycero-3-phosphate + an acyl-CoA = a 1,2-diacyl-sn-glycero-3-phosphate + CoA. The catalysed reaction is a 1-acyl-sn-glycero-3-phosphocholine + an acyl-CoA = a 1,2-diacyl-sn-glycero-3-phosphocholine + CoA. The enzyme catalyses 1-acyl-sn-glycero-3-phospho-(1'-sn-glycerol) + an acyl-CoA = a 1,2-diacyl-sn-glycero-3-phospho-(1'-sn-glycerol) + CoA. It catalyses the reaction a 1-acyl-sn-glycero-3-phospho-(1D-myo-inositol) + an acyl-CoA = a 1,2-diacyl-sn-glycero-3-phospho-(1D-myo-inositol) + CoA. It carries out the reaction a 1-acyl-sn-glycero-3-phospho-L-serine + an acyl-CoA = a 1,2-diacyl-sn-glycero-3-phospho-L-serine + CoA. The catalysed reaction is a 1-acyl-sn-glycero-3-phosphoethanolamine + an acyl-CoA = a 1,2-diacyl-sn-glycero-3-phosphoethanolamine + CoA. The enzyme catalyses 1-(9Z-octadecenoyl)-sn-glycero-3-phosphoethanolamine + (9Z)-octadecenoyl-CoA = 1,2-di-(9Z-octadecenoyl)-sn-glycero-3-phosphoethanolamine + CoA. It catalyses the reaction 1-(9Z-octadecenoyl)-sn-glycero-3-phosphoethanolamine + (9Z)-hexadecenoyl-CoA = 1-(9Z)-octadecenoyl-2-(9Z)-hexadecenoyl-sn-glycero-3-phosphoethanolamine + CoA. It carries out the reaction 1-(9Z-octadecenoyl)-sn-glycero-3-phosphoethanolamine + hexadecanoyl-CoA = 1-(9Z-octadecenoyl)-2-hexadecanoyl-sn-glycero-3-phosphoethanolamine + CoA. The catalysed reaction is 1-(9Z-octadecenoyl)-sn-glycero-3-phosphoethanolamine + tetradecanoyl-CoA = 1-(9Z)-octadecenoyl-2-tetradecanoyl-sn-glycero-3-phosphoethanolamine + CoA. The enzyme catalyses 1-(9Z-octadecenoyl)-sn-glycero-3-phosphate + (9Z)-octadecenoyl-CoA = 1,2-di-(9Z-octadecenoyl)-sn-glycero-3-phosphate + CoA. It catalyses the reaction (9Z)-hexadecenoyl-CoA + 1-hexadecanoyl-sn-glycero-3-phosphocholine = 1-hexadecanoyl-2-(9Z-hexadecenoyl)-sn-glycero-3-phosphocholine + CoA. It carries out the reaction 1-hexadecanoyl-sn-glycero-3-phosphocholine + (9Z)-octadecenoyl-CoA = 1-hexadecanoyl-2-(9Z-octadecenoyl)-sn-glycero-3-phosphocholine + CoA. The catalysed reaction is 1-tetradecanoyl-sn-glycero-3-phosphoethanolamine + (9Z)-octadecenoyl-CoA = 1-tetradecanoyl-2-(9Z-octadecenoyl)-sn-glycero-3-phosphoethanolamine + CoA. The enzyme catalyses 1-(9Z-octadecenoyl)-sn-glycero-3-phospho-L-serine + (9Z)-octadecenoyl-CoA = 1,2-di-(9Z)-octadecenoyl-sn-glycero-3-phospho-L-serine + CoA. It catalyses the reaction a 1-acyl-sn-glycero-3-phospho-(1D-myo-inositol) + (9Z)-octadecenoyl-CoA = a 1-acyl-2-(9Z-octadecenoyl)-sn-glycero-3-phospho-(1D-myo-inositol) + CoA. It functions in the pathway lipid metabolism; phospholipid metabolism. In terms of biological role, broad specificity membrane-bound O-acyltransferase that mediates the incorporation of unsaturated acyl chains into the sn-2 position of various lysophospholipids. Preferentially acylates lysophosphocholine (LPC), but also lysophosphoethanolamine (LPE), lysophosphatidylglycerol (LPG), lysophosphatidic acid (LPA), lysophosphoethanolamine (LPE), lysophosphoinositol (LPI), and lysophosphoserine (LPS). Prefers an acyl residue to an alkyl residue at the sn-1 position of lysophospholipid acceptors. Accepts acyl chains in acyl-CoA from C-2 to C-20, and shows strong preference for unsaturated acyl-CoAs with 16-20 carbons. Together with SLC1, plays a central role in phosphatidic acid (PA) biosynthesis. PA is the intermediate, from which all glycerophospholipids are synthesized. Can also introduce an acyl chain at the sn-1 position of the lysophosphatidylcholine analog 1-hydroxy-2-hexadecyl-sn-glycero-3-phosphocholine (HHPC). The sequence is that of Lysophospholipid acyltransferase from Saccharomyces cerevisiae (strain ATCC 204508 / S288c) (Baker's yeast).